Consider the following 155-residue polypeptide: Endoribonuclease YbeY (155 aa).

Zn(2+) is bound by residues histidine 114, histidine 118, and histidine 124.

The protein belongs to the endoribonuclease YbeY family. The cofactor is Zn(2+).

It is found in the cytoplasm. Single strand-specific metallo-endoribonuclease involved in late-stage 70S ribosome quality control and in maturation of the 3' terminus of the 16S rRNA. The polypeptide is Endoribonuclease YbeY (Salmonella arizonae (strain ATCC BAA-731 / CDC346-86 / RSK2980)).